A 301-amino-acid polypeptide reads, in one-letter code: Movement protein (301 aa).

Disordered regions lie at residues 1–22 and 282–301; these read MLTL…GPLV and VEEE…FDEI. 2 essential for tubule formation and cell-to-cell movement regions span residues 19-159 and 209-283; these read GPLV…NMPS and GVSF…RSVE. The interval 284–288 is essential for long-distance movement; the sequence is EEEEG.

The protein belongs to the tospovirus movement protein family. As to quaternary structure, oligomerizes to form tubule structures through host plasmodesma. Interacts with host A.thaliana At4g26020 protein, which is involved in intra- and inter-cellular trafficking.

Its subcellular location is the host cell junction. It is found in the host plasmodesma. Functionally, viral movemement protein which is responsible for cell-to cell spread of viral genome. Increases the size exclusion limit (SEL) of plasmodesmata by forming tubules structures, thereby allowing viral ribonucleocapsids to spread directly to neighboring cells. This is Movement protein (NSM) from Tomato spotted wilt virus (strain Brazilian Br-01) (TSWV).